The chain runs to 826 residues: Ubiquitin carboxyl-terminal hydrolase 16 (826 aa).

The segment at 22–142 adopts a UBP-type zinc-finger fold; sequence PVCRHIRKGL…QVVDYVRKQA (121 aa). Zn(2+)-binding residues include Cys-24, His-26, Cys-48, Cys-51, Cys-74, Cys-77, Cys-82, His-90, His-94, His-103, Cys-116, and Cys-119. Residue Lys-140 forms a Glycyl lysine isopeptide (Lys-Gly) (interchain with G-Cter in SUMO2) linkage. The segment at 144–189 is disordered; that stretch reads NTTPESAEDNGNIELENKKLEKESKNEQEREKKENMARENPSMNST. Basic and acidic residues predominate over residues 158–180; the sequence is LENKKLEKESKNEQEREKKENMA. Ser-188 is modified (phosphoserine). The region spanning 195-825 is the USP domain; that stretch reads KGLSNLGNTC…QAYLLFYERI (631 aa). Residue Cys-204 is the Nucleophile of the active site. Residues 393–407 show a composition bias toward basic and acidic residues; it reads SGKKSINDKNLKKTM. The tract at residues 393 to 458 is disordered; that stretch reads SGKKSINDKN…QAKNQRRQQK (66 aa). Residues 408-419 show a composition bias toward acidic residues; sequence EDEDKDSEEEKD. Phosphoserine is present on Ser-414. Residues 420–429 show a composition bias toward basic and acidic residues; sequence NDSYLKERND. Basic residues predominate over residues 437 to 457; that stretch reads HLQKKAKKQAKKQAKNQRRQQ. Residues Ser-530 and Ser-551 each carry the phosphoserine modification. The active-site Proton acceptor is the His-760.

Belongs to the peptidase C19 family. USP16 subfamily. As to quaternary structure, homotetramer. Associates with late pre-40S ribosomes. Interacts with CEP78; promoting deubiquitination of tektins. In terms of processing, phosphorylated at the onset of mitosis and dephosphorylated during the metaphase/anaphase transition. Phosphorylation by AURKB enhances the deubiquitinase activity.

Its subcellular location is the nucleus. It carries out the reaction Thiol-dependent hydrolysis of ester, thioester, amide, peptide and isopeptide bonds formed by the C-terminal Gly of ubiquitin (a 76-residue protein attached to proteins as an intracellular targeting signal).. Specifically deubiquitinates 'Lys-120' of histone H2A (H2AK119Ub), a specific tag for epigenetic transcriptional repression, thereby acting as a coactivator. Deubiquitination of histone H2A is a prerequisite for subsequent phosphorylation at 'Ser-11' of histone H3 (H3S10ph), and is required for chromosome segregation when cells enter into mitosis. In resting B- and T-lymphocytes, phosphorylation by AURKB leads to enhance its activity, thereby maintaining transcription in resting lymphocytes. Regulates Hox gene expression via histone H2A deubiquitination. Prefers nucleosomal substrates. Does not deubiquitinate histone H2B. Also deubiquitinates non-histone proteins, such as ribosomal protein RPS27A: deubiquitination of monoubiquitinated RPS27A promotes maturation of the 40S ribosomal subunit. Also mediates deubiquitination of tektin proteins (TEKT1, TEKT2, TEK3, TEKT4 and TEKT5), promoting their stability. The polypeptide is Ubiquitin carboxyl-terminal hydrolase 16 (Bos taurus (Bovine)).